Consider the following 356-residue polypeptide: tRNA N6-adenosine threonylcarbamoyltransferase (356 aa).

Fe cation contacts are provided by histidine 116 and histidine 120. Residues 139-143, aspartate 174, glycine 187, aspartate 191, and asparagine 281 each bind substrate; that span reads IVSGG. Aspartate 309 contributes to the Fe cation binding site.

Belongs to the KAE1 / TsaD family. The cofactor is Fe(2+).

It localises to the cytoplasm. The enzyme catalyses L-threonylcarbamoyladenylate + adenosine(37) in tRNA = N(6)-L-threonylcarbamoyladenosine(37) in tRNA + AMP + H(+). Required for the formation of a threonylcarbamoyl group on adenosine at position 37 (t(6)A37) in tRNAs that read codons beginning with adenine. Is involved in the transfer of the threonylcarbamoyl moiety of threonylcarbamoyl-AMP (TC-AMP) to the N6 group of A37, together with TsaE and TsaB. TsaD likely plays a direct catalytic role in this reaction. In Frankia alni (strain DSM 45986 / CECT 9034 / ACN14a), this protein is tRNA N6-adenosine threonylcarbamoyltransferase.